A 150-amino-acid polypeptide reads, in one-letter code: Retinal rod rhodopsin-sensitive cGMP 3',5'-cyclic phosphodiesterase subunit delta (150 aa).

Residues 144 to 150 (RVRLFYV) form a required for association with membranes region.

It belongs to the PDE6D/unc-119 family. Interacts with the prenylated catalytic subunits of PDE6, an oligomer composed of two catalytic chains (PDE6A and PDE6B) and two inhibitory chains (gamma); has no effect on enzyme activity but promotes the release of the prenylated enzyme from cell membrane. Interacts with prenylated GRK1 and GRK7. Interacts with prenylated Ras family members, including RAP2A and RAP2C. Interacts with prenylated RHEB and NRAS. Interacts with prenylated HRAS and KRAS. Interacts with RAB13 (prenylated form); dissociates RAB13 from membranes. Interacts with prenylated INPP5E. Interacts with RAB28 (prenylated form); the interaction promotes RAB28 delivery to the photoreceptor outer segments. Interacts with RPGR. Interacts with ARL2. Interacts with ARL3; the interaction occurs specifically with the GTP-bound form of ARL3. Interaction with ARL2 and ARL3 promotes release of farnesylated cargo proteins. Widely expressed. Detected in various tissues including spleen, prostate gland, testis, ovary, small intestine, colon, retina, and peripheral blood.

Its subcellular location is the cytoplasm. It localises to the cytosol. The protein resides in the cytoplasmic vesicle membrane. It is found in the cytoskeleton. The protein localises to the cilium basal body. Functionally, promotes the release of prenylated target proteins from cellular membranes. Modulates the activity of prenylated or palmitoylated Ras family members by regulating their subcellular location. Required for normal ciliary targeting of farnesylated target proteins, such as INPP5E. Required for RAB28 localization to the cone cell outer segments in the retina. Modulates the subcellular location of target proteins by acting as a GTP specific dissociation inhibitor (GDI). Increases the affinity of ARL3 for GTP by several orders of magnitude. Stabilizes ARL3-GTP by decreasing the nucleotide dissociation rate. This chain is Retinal rod rhodopsin-sensitive cGMP 3',5'-cyclic phosphodiesterase subunit delta (PDE6D), found in Homo sapiens (Human).